Reading from the N-terminus, the 164-residue chain is RNA pyrophosphohydrolase (164 aa).

Positions 12–158 constitute a Nudix hydrolase domain; sequence RYRQCAGVML…KREVYRAVVK (147 aa). Positions 47–68 match the Nudix box motif; it reads GGIDPGETQQEAAMRELEEETG.

It belongs to the Nudix hydrolase family. RppH subfamily. Requires a divalent metal cation as cofactor.

Functionally, accelerates the degradation of transcripts by removing pyrophosphate from the 5'-end of triphosphorylated RNA, leading to a more labile monophosphorylated state that can stimulate subsequent ribonuclease cleavage. This is RNA pyrophosphohydrolase from Erythrobacter litoralis (strain HTCC2594).